Here is a 175-residue protein sequence, read N- to C-terminus: ATP-dependent protease subunit HslV (175 aa).

Residue Thr-2 is part of the active site. Residues Gly-158, Cys-161, and Thr-164 each coordinate Na(+).

Belongs to the peptidase T1B family. HslV subfamily. As to quaternary structure, a double ring-shaped homohexamer of HslV is capped on each side by a ring-shaped HslU homohexamer. The assembly of the HslU/HslV complex is dependent on binding of ATP.

It is found in the cytoplasm. The catalysed reaction is ATP-dependent cleavage of peptide bonds with broad specificity.. Allosterically activated by HslU binding. Protease subunit of a proteasome-like degradation complex believed to be a general protein degrading machinery. This chain is ATP-dependent protease subunit HslV, found in Haemophilus influenzae (strain PittEE).